The sequence spans 526 residues: Bifunctional purine biosynthesis protein PurH (526 aa).

In terms of domain architecture, MGS-like spans 1–145 (MSKAPLALLS…KNHAHVGIVT (145 aa)).

It belongs to the PurH family.

It carries out the reaction (6R)-10-formyltetrahydrofolate + 5-amino-1-(5-phospho-beta-D-ribosyl)imidazole-4-carboxamide = 5-formamido-1-(5-phospho-D-ribosyl)imidazole-4-carboxamide + (6S)-5,6,7,8-tetrahydrofolate. It catalyses the reaction IMP + H2O = 5-formamido-1-(5-phospho-D-ribosyl)imidazole-4-carboxamide. It participates in purine metabolism; IMP biosynthesis via de novo pathway; 5-formamido-1-(5-phospho-D-ribosyl)imidazole-4-carboxamide from 5-amino-1-(5-phospho-D-ribosyl)imidazole-4-carboxamide (10-formyl THF route): step 1/1. Its pathway is purine metabolism; IMP biosynthesis via de novo pathway; IMP from 5-formamido-1-(5-phospho-D-ribosyl)imidazole-4-carboxamide: step 1/1. This Psychrobacter arcticus (strain DSM 17307 / VKM B-2377 / 273-4) protein is Bifunctional purine biosynthesis protein PurH.